Reading from the N-terminus, the 334-residue chain is MPLNLRHRHFLRLMDFTPTEIQFLLDLSANLKKAKYTGTEQPRLKGKNIALIFEKTSTRTRCSFEVAAYDQGANVTYIGPSGSQIGHKESMKDTARVLGRMYDGIQYRGYGQELVEILAQYSGVPVWNGLTDDFHPTQILADFLTMLEHGEGKRLNQMKMAYLGDARNNMGNSFVEGAALMGMDLRLVAPKAYWPEQKLLDEVAEMAKKTGAKITCTENVEEGVKGVDFLYTDIWVSMGEPEEAWEQRINLMKPYQVNKALLEKTGNPKVKFMHCLPAFHDENTTVGKEMAQKYGMNGLEVTDEVFESDASIVFDEAENRMHTIKAVMVATLGQ.

Carbamoyl phosphate contacts are provided by residues 57-60 (STRT), Gln84, Arg108, and 135-138 (HPTQ). L-ornithine-binding positions include Asn169, Asp233, and 237-238 (SM). Carbamoyl phosphate contacts are provided by residues 275–276 (CL) and Arg320.

Belongs to the aspartate/ornithine carbamoyltransferase superfamily. OTCase family.

The protein localises to the cytoplasm. It catalyses the reaction carbamoyl phosphate + L-ornithine = L-citrulline + phosphate + H(+). Its pathway is amino-acid biosynthesis; L-arginine biosynthesis; L-arginine from L-ornithine and carbamoyl phosphate: step 1/3. Functionally, reversibly catalyzes the transfer of the carbamoyl group from carbamoyl phosphate (CP) to the N(epsilon) atom of ornithine (ORN) to produce L-citrulline. The chain is Ornithine carbamoyltransferase (argF) from Pasteurella multocida (strain Pm70).